The primary structure comprises 746 residues: Steroid receptor seven-up, isoform A (746 aa).

The disordered stretch occupies residues 38-191 (PPHSAWHEPP…HSQSSNSGSQ (154 aa)). Positions 56 to 68 (AASAGPGTTTGSV) are enriched in low complexity. Polar residues predominate over residues 83–101 (QQSAVIKQDLSCPSLNQAG). Positions 122 to 141 (GSAGGHHSGSGSGSGSGVNP) are enriched in gly residues. The segment covering 158–170 (MLTSIKGQPTGCG) has biased composition (polar residues). Residues 171 to 191 (STTPSSQANSSHSQSSNSGSQ) show a composition bias toward low complexity. A DNA-binding region (nuclear receptor) is located at residues 197–272 (NIECVVCGDK…MGMRREAVQR (76 aa)). 2 consecutive NR C4-type zinc fingers follow at residues 200 to 220 (CVVCGDKSSGKHYGQFTCEGC) and 236 to 260 (CRGSRNCPIDQHHRNQCQYCRLKKC). One can recognise an NR LBD domain in the interval 307–556 (YLSSYISLLL…PLVPSAGSAF (250 aa)). The disordered stretch occupies residues 579–645 (QATPPSSGGG…APAPVPTSSV (67 aa)). Polar residues predominate over residues 592–605 (GHNNSSGLGASLPT). The span at 606-645 (QSQSGSSSRNLTASPLSTSLATAPAPASASAPAPVPTSSV) shows a compositional bias: low complexity.

It belongs to the nuclear hormone receptor family. NR2 subfamily. Expressed in several embryonic tissues; dorsal vessel, oenocyte and fat body. CNS expression is dynamic and confined to temporally restricted subsections of the NB lineage; expressed in many NB and GMCs, but only a small number of neurons.

The protein localises to the nucleus. Its function is as follows. Receptor that is required in photoreceptors R1, R3, R4 and R6 during eye development; generation of the ganglion mother cell-2 (GMC-2) fate in the nb7-3 lineage, coinciding with the transition in the expression of HB to KR in the neuroblasts (NBs). The sequence is that of Steroid receptor seven-up, isoform A (svp) from Drosophila melanogaster (Fruit fly).